A 499-amino-acid chain; its full sequence is Centrosomal protein of 57 kDa (499 aa).

A compositionally biased stretch (low complexity) spans 1 to 16; that stretch reads MAAASVSAASDSQFSS. The interval 1-41 is disordered; the sequence is MAAASVSAASDSQFSSVLAEPSRSNGNMVHHSSSPYVLYPP. Polar residues predominate over residues 22 to 35; the sequence is SRSNGNMVHHSSSP. Serine 53 carries the phosphoserine modification. The segment at 58–239 is centrosome localization domain (CLD); sequence TFAYPESNSR…RAAELQSGIE (182 aa). Positions 63–242 form a coiled coil; it reads ESNSRAIFSA…ELQSGIEANR (180 aa). 2 disordered regions span residues 255-275 and 424-476; these read TSTR…GFRN and LEKQ…SRKN. Residues 278–490 are mediates interaction with microtubules; that stretch reads GAQPHYRLCL…KDMQTLQNSL (213 aa). Residues 388 to 491 adopt a coiled-coil conformation; the sequence is PSEELKDNLE…DMQTLQNSLQ (104 aa). Basic and acidic residues predominate over residues 427-443; that stretch reads QSTDKQKELKGNKKTLD. The span at 448-458 shows a compositional bias: low complexity; it reads SSSRSSVITRT. Over residues 460–474 the composition is skewed to basic and acidic residues; it reads SKKDFTKQRPGEKSR.

Belongs to the translokin family. As to quaternary structure, homodimer and homooligomer. Interacts with FGF2 and RAP80. Does not interact with FGF1 or FGF2 isoform 24 kDa. Interacts with microtubules. As to expression, ubiquitous (at protein level).

The protein resides in the nucleus. It localises to the cytoplasm. It is found in the cytoskeleton. Its subcellular location is the microtubule organizing center. The protein localises to the centrosome. Centrosomal protein which may be required for microtubule attachment to centrosomes. May act by forming ring-like structures around microtubules. Mediates nuclear translocation and mitogenic activity of the internalized growth factor FGF2. This chain is Centrosomal protein of 57 kDa (Cep57), found in Rattus norvegicus (Rat).